Here is a 476-residue protein sequence, read N- to C-terminus: MSVITRFAPSPTGFLHIGGARTALFNWLYAKHTGGKMLLRIEDTDRERSTEAAVRAIIDGLHWMGLSYDGSPISQFERAERHRQIAEQLVENGKAYYCYASPEELAEMREKARAEGRPPRYDGRWRNRDHSEAPQGIKPVIRIKAPEDGETIVHDRVQGDVRFPNKDLDDFIILRSDGSPTYMHAVVVDDHDMGVTHIIRGDDHLTNAARQTIIFKAMGWDIPVMAHIPLIHGENGAKLSKRHGALGVDAYRTMGYLPAALRNYLVRLGWSHGDDELMSLQDMISWFDIEDINKGAARFDLKKLDSINGHYMRMSNDQELFDAALDILPETDGGTEIIERLDEQRRVQFLKAIPHLKERSKTLCELIDNASFIFTQRPLQLNEKAQMLLDKNGRTILNDLYLALKACPSWDTKALDETLRSYIQTQNLKFGSIAQPLRAALTGCTTSPGVLDVLILLGRDESLYRINDQLITTVGL.

The 'HIGH' region motif lies at P9–G19. The 'KMSKS' region signature appears at K238–R242. K241 serves as a coordination point for ATP.

This sequence belongs to the class-I aminoacyl-tRNA synthetase family. Glutamate--tRNA ligase type 1 subfamily. As to quaternary structure, monomer.

It localises to the cytoplasm. The enzyme catalyses tRNA(Glu) + L-glutamate + ATP = L-glutamyl-tRNA(Glu) + AMP + diphosphate. Catalyzes the attachment of glutamate to tRNA(Glu) in a two-step reaction: glutamate is first activated by ATP to form Glu-AMP and then transferred to the acceptor end of tRNA(Glu). In Bartonella tribocorum (strain CIP 105476 / IBS 506), this protein is Glutamate--tRNA ligase 1.